The primary structure comprises 166 residues: MPEFLDIRPLTSAAFAAFGEVIEADPASMRLINGGTTERFHALAAAEAAGEGARVIINLFRGQPRNFPYDVDMMERHPFGSQSFSPVSGRPFLVVVSEDESGRPGRPQVFLARGDQGVNYRRNVWHHPLMALGEVSDFLVVDRDGAGNNLEEFFFETPYIIKEPAL.

The protein belongs to the ureidoglycolate lyase family. Homodimer. It depends on Ni(2+) as a cofactor.

The enzyme catalyses (S)-ureidoglycolate = urea + glyoxylate. It functions in the pathway nitrogen metabolism; (S)-allantoin degradation. Its function is as follows. Catalyzes the catabolism of the allantoin degradation intermediate (S)-ureidoglycolate, generating urea and glyoxylate. Involved in the utilization of allantoin as nitrogen source. The chain is Ureidoglycolate lyase from Rhizobium leguminosarum bv. trifolii (strain WSM2304).